Reading from the N-terminus, the 251-residue chain is Flap endonuclease Xni (251 aa).

D104 contacts Mg(2+). The 90-residue stretch at 160-249 (VLPRQLPDYW…IDGNLQQLRL (90 aa)) folds into the 5'-3' exonuclease domain. K(+) is bound by residues L171, A172, P180, V182, and I185. Residues 184–189 (GIGPKS) form an interaction with DNA region.

It belongs to the Xni family. The cofactor is Mg(2+). Requires K(+) as cofactor.

Functionally, has flap endonuclease activity. During DNA replication, flap endonucleases cleave the 5'-overhanging flap structure that is generated by displacement synthesis when DNA polymerase encounters the 5'-end of a downstream Okazaki fragment. This Salmonella dublin (strain CT_02021853) protein is Flap endonuclease Xni.